The following is a 228-amino-acid chain: Glucose-induced degradation protein 8 homolog (228 aa).

A LisH domain is found at 29-61 (SKSDLNKLVMNYLVIEGYQEAAAKFQEESSTQT). Residues 67 to 124 (SIADRMAIRSAIQCGDVEKGIEIVNDLNPEILDTNPQLYFHLQQQKLIELIRKGMTAE) form the CTLH domain.

The protein belongs to the GID8 family.

The protein localises to the cytoplasm. It localises to the nucleus. Functionally, core component of the CTLH E3 ubiquitin-protein ligase complex that mediates ubiquitination and subsequent proteasomal degradation of target proteins. Acts as a positive regulator of Wnt signaling pathway by promoting beta-catenin (CTNNB1) nuclear accumulation. The sequence is that of Glucose-induced degradation protein 8 homolog from Dictyostelium discoideum (Social amoeba).